Consider the following 580-residue polypeptide: Acyl-coenzyme A synthetase ACSM4, mitochondrial (580 aa).

Residues 1-22 (MKIFFRYQTFRFIWLTKPPGRR) constitute a mitochondrion transit peptide. Residues 229 to 237 (TSGTTGFPK), 368 to 373 (EGYGQT), Asp455, Arg470, and Lys566 contribute to the ATP site.

Belongs to the ATP-dependent AMP-binding enzyme family. Requires Mg(2+) as cofactor. It depends on Mn(2+) as a cofactor.

The protein resides in the mitochondrion. It carries out the reaction a medium-chain fatty acid + ATP + CoA = a medium-chain fatty acyl-CoA + AMP + diphosphate. The catalysed reaction is hexanoate + ATP + CoA = hexanoyl-CoA + AMP + diphosphate. The enzyme catalyses octanoate + ATP + CoA = octanoyl-CoA + AMP + diphosphate. It catalyses the reaction decanoate + ATP + CoA = decanoyl-CoA + AMP + diphosphate. It carries out the reaction dodecanoate + ATP + CoA = dodecanoyl-CoA + AMP + diphosphate. Its function is as follows. Catalyzes the activation of fatty acids by CoA to produce an acyl-CoA, the first step in fatty acid metabolism. Capable of activating medium-chain fatty acids with a preference for C6-12 fatty acids. This chain is Acyl-coenzyme A synthetase ACSM4, mitochondrial (ACSM4), found in Homo sapiens (Human).